A 403-amino-acid chain; its full sequence is Protein-export membrane protein SecD (403 aa).

Transmembrane regions (helical) follow at residues L13 to N33, F245 to A265, V285 to A305, G306 to V326, V347 to M367, and G368 to T388.

The protein belongs to the SecD/SecF family. SecD subfamily. Part of the protein translocation apparatus. Forms a complex with SecF.

It localises to the cell membrane. Functionally, involved in protein export. In Methanopyrus kandleri (strain AV19 / DSM 6324 / JCM 9639 / NBRC 100938), this protein is Protein-export membrane protein SecD.